Reading from the N-terminus, the 375-residue chain is Myb family transcription factor PHL5 (375 aa).

Over residues 159-171 the composition is skewed to polar residues; it reads TSSQHQPKQSHPR. Positions 159–178 are disordered; it reads TSSQHQPKQSHPRFSSPPSF. The HTH myb-type domain occupies 189-249; that stretch reads CVNKTRIRWT…HLQKYRIAKY (61 aa). A DNA-binding region (H-T-H motif) is located at residues 220–245; the sequence is PKAILKRMDSDGLTIFHVKSHLQKYR. Positions 279-299 form a coiled coil; sequence KEALQLQLDVQRHLHEQLEIQ. An LHEQLE motif is present at residues 292–297; that stretch reads LHEQLE.

It belongs to the MYB-CC family.

It is found in the nucleus. The protein is Myb family transcription factor PHL5 of Arabidopsis thaliana (Mouse-ear cress).